We begin with the raw amino-acid sequence, 98 residues long: NADH-ubiquinone oxidoreductase chain 4L (98 aa).

3 helical membrane passes run 1 to 21 (MSMVYINLFLAFIMSLMGLLV), 29 to 49 (SLLCLEGMMLSLFIMISITIL), and 61 to 81 (IILLVFAACEAALGLSLLVMV).

It belongs to the complex I subunit 4L family. In terms of assembly, core subunit of respiratory chain NADH dehydrogenase (Complex I) which is composed of 45 different subunits.

The protein localises to the mitochondrion inner membrane. It carries out the reaction a ubiquinone + NADH + 5 H(+)(in) = a ubiquinol + NAD(+) + 4 H(+)(out). Core subunit of the mitochondrial membrane respiratory chain NADH dehydrogenase (Complex I) which catalyzes electron transfer from NADH through the respiratory chain, using ubiquinone as an electron acceptor. Part of the enzyme membrane arm which is embedded in the lipid bilayer and involved in proton translocation. In Mephitis mephitis (Striped skunk), this protein is NADH-ubiquinone oxidoreductase chain 4L (MT-ND4L).